The following is a 188-amino-acid chain: MLSELFNSLASFFSNIFSLFEGKKETRILMIGLDGAGKSTLLYKLKLGDVVSTIPTIGFNVETIEYKNLSMTVWDVGGQHKIRPLWKHYYHGSNAVIFVVDSTDRERMDEVKEEIDNLLIQDELKGTQILVFANKQDMNNAMNTAEIVNSLDLNSIKDRKWYVQPCSAIRSDGIYEGFDWVANSLNNK.

GTP contacts are provided by residues 34–40, 75–79, and 134–137; these read DGAGKST, DVGGQ, and NKQD.

The protein belongs to the small GTPase superfamily. Arf family.

Its subcellular location is the golgi apparatus. Functionally, GTP-binding protein that may be involved in protein trafficking. May modulate vesicle budding and uncoating within the Golgi apparatus. This is ADP-ribosylation factor J (arrJ) from Dictyostelium discoideum (Social amoeba).